A 520-amino-acid polypeptide reads, in one-letter code: Membrane-bound glycerophospholipid O-acyltransferase 2 (520 aa).

6 helical membrane-spanning segments follow: residues 22-42 (PIDQVNFVVCQLFALLAAIWF), 61-81 (TLLGLYLALFCFGWYALHFLV), 88-108 (CIMIIIGVENMHNYCFVFALG), 184-204 (FMGILAGPLCSYKDYITFIEG), 237-257 (LLVCGLSLLFHLTICTTLPVE), and 264-284 (FQATASWPTKIIYLYISLLAA). Active-site residues include asparagine 342 and histidine 373. A run of 3 helical transmembrane segments spans residues 366–386 (FILSAIWHGVYPGYYLTFLTG), 416–436 (VITWIVTQVAISYTVVPFVLL), and 444–464 (FYSSWYYCLHILGILVLLLLP).

The protein belongs to the membrane-bound acyltransferase family. In terms of tissue distribution, expressed in neutrophils.

It is found in the endoplasmic reticulum membrane. The enzyme catalyses a 1-acyl-sn-glycero-3-phosphocholine + an acyl-CoA = a 1,2-diacyl-sn-glycero-3-phosphocholine + CoA. The catalysed reaction is a 1-acyl-sn-glycero-3-phosphoethanolamine + an acyl-CoA = a 1,2-diacyl-sn-glycero-3-phosphoethanolamine + CoA. It catalyses the reaction a 1-acyl-sn-glycero-3-phosphate + an acyl-CoA = a 1,2-diacyl-sn-glycero-3-phosphate + CoA. It carries out the reaction (9Z)-hexadecenoyl-CoA + 1-hexadecanoyl-sn-glycero-3-phosphocholine = 1-hexadecanoyl-2-(9Z-hexadecenoyl)-sn-glycero-3-phosphocholine + CoA. The enzyme catalyses 1-hexadecanoyl-sn-glycero-3-phosphoethanolamine + (9Z)-octadecenoyl-CoA = 1-hexadecanoyl-2-(9Z-octadecenoyl)-sn-glycero-3-phosphoethanolamine + CoA. The catalysed reaction is 1-hexadecanoyl-sn-glycero-3-phosphoethanolamine + (9Z)-hexadecenoyl-CoA = 1-hexadecanoyl-2-(9Z)-hexadecenoyl-sn-glycero-3-phosphoethanolamine + CoA. It catalyses the reaction 1-(9Z-octadecenoyl)-sn-glycero-3-phospho-L-serine + hexadecanoyl-CoA = 1-(9Z)-octadecenoyl-2-hexadecanoyl-sn-glycero-3-phosphoserine + CoA. It carries out the reaction (9Z,12Z)-octadecadienoyl-CoA + 1-hexadecanoyl-sn-glycero-3-phosphocholine = 1-hexadecanoyl-2-(9Z,12Z-octadecadienoyl)-sn-glycero-3-phosphocholine + CoA. The enzyme catalyses 1-hexadecanoyl-sn-glycero-3-phosphocholine + (9Z)-octadecenoyl-CoA = 1-hexadecanoyl-2-(9Z-octadecenoyl)-sn-glycero-3-phosphocholine + CoA. The catalysed reaction is 1-hexadecanoyl-sn-glycero-3-phosphate + (9Z)-hexadecenoyl-CoA = 1-hexadecanoyl-2-[(9Z)-hexadec-9-enoyl]-sn-glycero-3-phosphate + CoA. It catalyses the reaction 1-hexadecanoyl-sn-glycero-3-phosphate + (9Z)-octadecenoyl-CoA = 1-hexadecanoyl-2-(9Z-octadecenoyl)-sn-glycero-3-phosphate + CoA. It carries out the reaction a 1-O-(1Z-alkenyl)-sn-glycero-3-phosphocholine + (9Z)-octadecenoyl-CoA = 1-O-(1Z)-alkenyl-2-(9Z)-octadecenoyl-sn-glycero-3-phosphocholine + CoA. The enzyme catalyses a 1-O-(1Z-alkenyl)-sn-glycero-3-phosphoethanolamine + (9Z)-octadecenoyl-CoA = 1-O-(1Z)-alkenyl-2-(9Z)-octadecenoyl-sn-glycero-3-phosphoethanolamine + CoA. The catalysed reaction is 1-octadecanoyl-sn-glycero-3-phosphoethanolamine + (9Z)-octadecenoyl-CoA = 1-octadecanoyl-2-(9Z-octadecenoyl)-sn-glycero-3-phosphoethanolamine + CoA. It catalyses the reaction 1-octadecanoyl-sn-glycero-3-phosphocholine + (9Z)-octadecenoyl-CoA = 1-octadecanoyl-2-(9Z-octadecenoyl)-sn-glycero-3-phosphocholine + CoA. It carries out the reaction 1-(9Z-octadecenoyl)-sn-glycero-3-phosphoethanolamine + (9Z)-octadecenoyl-CoA = 1,2-di-(9Z-octadecenoyl)-sn-glycero-3-phosphoethanolamine + CoA. It functions in the pathway lipid metabolism; phospholipid metabolism. With respect to regulation, partially inhibited by thimerosal. Acyltransferase which catalyzes the transfer of an acyl group from an acyl-CoA to a lysophospholipid leading to the production of a phospholipid and participates in the reacylation step of the phospholipid remodeling pathway also known as the Lands cycle. Catalyzes preferentially the acylation of lysophosphatidylethanolamine (1-acyl-sn-glycero-3-phosphoethanolamine or LPE) and lysophosphatidic acid (LPA) and to a lesser extend lysophosphatidylcholine (LPC) and lysophosphatidylserine (LPS). Prefers oleoyl-CoA as the acyl donor. May be involved in chondrocyte differentiation. The polypeptide is Membrane-bound glycerophospholipid O-acyltransferase 2 (Homo sapiens (Human)).